A 52-amino-acid chain; its full sequence is Light-harvesting protein B-870 alpha chain (52 aa).

Over 1–15 the chain is Cytoplasmic; the sequence is MAKFYKIWLIFDPRR. The chain crosses the membrane as a helical span at residues 16 to 36; sequence VFVAQGVFLFLLAAMIHLVVL. His32 is an a bacteriochlorophyll binding site. At 37–52 the chain is on the periplasmic side; that stretch reads SSGLNWFEAAAAVGGQ.

It belongs to the antenna complex alpha subunit family. The core complex is formed by different alpha and beta chains, binding bacteriochlorophyll molecules, and arranged most probably in tetrameric structures disposed around the reaction center. The non-pigmented gamma chains may constitute additional components.

It is found in the cell inner membrane. Its function is as follows. Antenna complexes are light-harvesting systems, which transfer the excitation energy to the reaction centers. This is Light-harvesting protein B-870 alpha chain (pufA) from Roseobacter denitrificans (strain ATCC 33942 / OCh 114) (Erythrobacter sp. (strain OCh 114)).